A 65-amino-acid chain; its full sequence is Small ribosomal subunit protein bS21 (65 aa).

This sequence belongs to the bacterial ribosomal protein bS21 family.

The polypeptide is Small ribosomal subunit protein bS21 (Flavobacterium psychrophilum (strain ATCC 49511 / DSM 21280 / CIP 103535 / JIP02/86)).